The chain runs to 142 residues: MVLSPADKTNVKTAWGKVGGHAGDYGAEALERMFLSFPTTKTYFPHFDLSHGSAQVKGHGKKVADALSNAVAHVDDMPNALSALSDLHAHKLRVDPVNFKLLSHCLLVTLAAHHPADFTPAVHASLDKFLASVSTVLTSKYR.

One can recognise a Globin domain in the interval 2–142 (VLSPADKTNV…VSTVLTSKYR (141 aa)). Ser4 is subject to Phosphoserine. Lys8 is subject to N6-succinyllysine. Thr9 carries the phosphothreonine modification. The residue at position 12 (Lys12) is an N6-succinyllysine. N6-acetyllysine; alternate is present on Lys17. Lys17 is modified (N6-succinyllysine; alternate). A Phosphotyrosine modification is found at Tyr25. Ser36 carries the phosphoserine modification. Lys41 carries the post-translational modification N6-succinyllysine. Position 50 is a phosphoserine (Ser50). Position 59 (His59) interacts with O2. His88 lines the heme b pocket. Ser103 carries the phosphoserine modification. A Phosphothreonine modification is found at Thr109. Phosphoserine occurs at positions 125 and 132. Phosphothreonine is present on residues Thr135 and Thr138. Residue Ser139 is modified to Phosphoserine.

Belongs to the globin family. In terms of assembly, heterotetramer of two alpha chains and two beta chains. In terms of tissue distribution, red blood cells.

In terms of biological role, involved in oxygen transport from the lung to the various peripheral tissues. Functionally, hemopressin acts as an antagonist peptide of the cannabinoid receptor CNR1. Hemopressin-binding efficiently blocks cannabinoid receptor CNR1 and subsequent signaling. This chain is Hemoglobin subunit alpha (HBA), found in Sapajus apella (Brown-capped capuchin).